The primary structure comprises 96 residues: Muconolactone Delta-isomerase 2 (96 aa).

This sequence belongs to the muconolactone Delta-isomerase family. As to quaternary structure, homodecamer.

The enzyme catalyses (S)-muconolactone = (4,5-dihydro-5-oxofuran-2-yl)-acetate. Its pathway is aromatic compound metabolism; beta-ketoadipate pathway; 5-oxo-4,5-dihydro-2-furylacetate from catechol: step 3/3. The sequence is that of Muconolactone Delta-isomerase 2 (catC2) from Acinetobacter lwoffii.